The chain runs to 117 residues: Large ribosomal subunit protein bL19 (117 aa).

Belongs to the bacterial ribosomal protein bL19 family.

Its function is as follows. This protein is located at the 30S-50S ribosomal subunit interface and may play a role in the structure and function of the aminoacyl-tRNA binding site. In Shewanella sediminis (strain HAW-EB3), this protein is Large ribosomal subunit protein bL19.